The primary structure comprises 1153 residues: Nitric oxide synthase, inducible (1153 aa).

A DINNN-motif; mediates interaction with SPSB1, SPSB2 and SPSB4 motif is present at residues 23–27 (DINNN). 2 residues coordinate Zn(2+): cysteine 110 and cysteine 115. (6R)-L-erythro-5,6,7,8-tetrahydrobiopterin is bound at residue serine 118. Cysteine 200 is a heme b binding site. The residue at position 234 (serine 234) is a Phosphoserine; by PKA. 4 residues coordinate L-arginine: glutamine 263, tryptophan 372, tyrosine 373, and glutamate 377. Residues arginine 381, isoleucine 462, tryptophan 463, and phenylalanine 476 each coordinate (6R)-L-erythro-5,6,7,8-tetrahydrobiopterin. Tyrosine 491 provides a ligand contact to heme b. The segment at 515-535 (LKVLVKAVLFACMLMRKTMAS) is calmodulin-binding. The Flavodoxin-like domain occupies 539-677 (VTILFATETG…AFRSWAVQTF (139 aa)). Threonine 545, glutamate 546, threonine 547, lysine 549, and serine 550 together coordinate FMN. Tyrosine 575 is modified (phosphotyrosine). Phosphoserine; by PKA is present on serine 578. FMN contacts are provided by serine 591, threonine 592, serine 628, arginine 633, cysteine 635, glutamate 661, and glutamine 665. The FAD-binding FR-type domain occupies 730–970 (KNVFTMRLKS…VRNASGFHLP (241 aa)). Residue arginine 750 coordinates NADP(+). An FAD-binding site is contributed by histidine 772. Serine 892 carries the phosphoserine; by PKA modification. The FAD site is built by arginine 906, tyrosine 908, serine 909, threonine 924, and alanine 926. Threonine 929 is an NADP(+) binding site. The FAD site is built by tyrosine 930, valine 943, cysteine 944, and serine 945. Threonine 984, arginine 1017, serine 1046, arginine 1047, lysine 1053, tyrosine 1055, glutamine 1057, and aspartate 1090 together coordinate NADP(+).

Belongs to the NOS family. As to quaternary structure, homodimer. Interacts with NHERF1. Interacts with GAPDH; induced by oxidatively-modified low-densitity lipoprotein (LDL(ox)). Interacts with S100A8 and S100A9 to form the iNOS-S100A8/9 transnitrosylase complex. Interacts with SPSB1, SPSB2 and SPSB4. Interacts with ELOC and CUL5 in the presence of SPSB1 or SPSB2 or SPSB4. Forms a complex with ASL, ASS1 and HSP90AA1; the complex regulates cell-autonomous L-arginine synthesis and citrulline recycling while channeling extracellular L-arginine to nitric oxide synthesis pathway. Heme b serves as cofactor. FAD is required as a cofactor. It depends on FMN as a cofactor. The cofactor is (6R)-L-erythro-5,6,7,8-tetrahydrobiopterin. Post-translationally, polyubiquitinated; mediated by SPSB1, SPSB2 and SPSB4, leading to proteasomal degradation. As to expression, expressed in the liver, retina, bone cells and airway epithelial cells of the lung. Not expressed in the platelets. Expressed in chondrocytes.

Its subcellular location is the cytoplasm. It is found in the cytosol. The enzyme catalyses 2 L-arginine + 3 NADPH + 4 O2 + H(+) = 2 L-citrulline + 2 nitric oxide + 3 NADP(+) + 4 H2O. Its activity is regulated as follows. Regulated by calcium/calmodulin. Aspirin inhibits expression and function of this enzyme and effects may be exerted at the level of translational/post-translational modification and directly on the catalytic activity. In terms of biological role, produces nitric oxide (NO) which is a messenger molecule with diverse functions throughout the body. In macrophages, NO mediates tumoricidal and bactericidal actions. Also has nitrosylase activity and mediates cysteine S-nitrosylation of cytoplasmic target proteins such PTGS2/COX2. As component of the iNOS-S100A8/9 transnitrosylase complex involved in the selective inflammatory stimulus-dependent S-nitrosylation of GAPDH on 'Cys-247' implicated in regulation of the GAIT complex activity and probably multiple targets including ANXA5, EZR, MSN and VIM. Involved in inflammation, enhances the synthesis of pro-inflammatory mediators such as IL6 and IL8. The sequence is that of Nitric oxide synthase, inducible from Homo sapiens (Human).